Reading from the N-terminus, the 109-residue chain is Profilin (109 aa).

The protein belongs to the profilin family. Multimer. Occurs in many kinds of cells as a complex with monomeric actin in a 1:1 ratio.

It is found in the cytoplasm. The protein resides in the cytoskeleton. In terms of biological role, binds to actin and affects the structure of the cytoskeleton. At high concentrations, profilin prevents the polymerization of actin, whereas it enhances it at low concentrations. By binding to PIP2, it inhibits the formation of IP3 and DG. The sequence is that of Profilin from Actinidia deliciosa (Kiwi).